The primary structure comprises 373 residues: GDP-mannose 4,6-dehydratase (373 aa).

NADP(+)-binding positions include 10–15 (GITGQD), 65–66 (DL), 87–91 (LGAQS), and tyrosine 102. Threonine 134 is an active-site residue. Catalysis depends on nucleophile residues glutamate 136 and tyrosine 158. Lysine 162, histidine 188, and arginine 193 together coordinate NADP(+).

The protein belongs to the NAD(P)-dependent epimerase/dehydratase family. GDP-mannose 4,6-dehydratase subfamily. NADP(+) serves as cofactor.

The catalysed reaction is GDP-alpha-D-mannose = GDP-4-dehydro-alpha-D-rhamnose + H2O. Catalyzes the conversion of GDP-D-mannose to GDP-4-dehydro-6-deoxy-D-mannose. This chain is GDP-mannose 4,6-dehydratase, found in Vibrio cholerae serotype O1 (strain ATCC 39315 / El Tor Inaba N16961).